The following is a 47-amino-acid chain: Protein YpaB (47 aa).

The protein is Protein YpaB (ypaB) of Escherichia coli (strain K12).